The primary structure comprises 257 residues: Protein MoaE (257 aa).

NAD(+) is bound at residue 6-29 (VITGGGTGIGAACARLMHPAGERV). The disordered stretch occupies residues 75–96 (LMSSSAAPAGWATAPPPRPATA). S132 is a substrate binding site. Catalysis depends on Y145, which acts as the Proton acceptor.

This sequence belongs to the short-chain dehydrogenases/reductases (SDR) family.

Its function is as follows. Might catalyze the conversion of monoamine compounds or their metabolites. This Klebsiella aerogenes (Enterobacter aerogenes) protein is Protein MoaE (moaE).